Here is a 400-residue protein sequence, read N- to C-terminus: MTTLGTPLSPSATRVLLLGSGELGKEVAIELQRFGVEVIAADRYANAPAMQVAHRSHVLDMLDPAALRVLIASERPHVIVPEIEAIHTETLVALEREQGQKVIPAARAARLTMDREGIRRLAAETLGLPTSPYRFVDTAADYREAIAAVGLPCVVKPVMSSSGKGQSTLRSEADIDAAWEYAQTGGRAGAGRCIVEGFIDFDYEITLLTVRHAGGTSYCDPIGHWQQDGDYRESWQPQPMSAAALRRSQEIAKAITDDLGGWGLFGVELFVKGDEVWFSEVSPRPHDTGLVTLVSQELSEFALHARAILGLPVGAEDGGVIGQSGPSASCALLAHGNGVPVFDNVADALRDPDTALRLFGKPRVDGHRRVGVTLARADSIDAAREKARVAAAALGIQLTA.

N(1)-(5-phospho-beta-D-ribosyl)glycinamide contacts are provided by residues 22-23 and E82; that span reads EL. Residues R115, K156, 161 to 166, 196 to 199, and E204 contribute to the ATP site; these read SSGKGQ and EGFI. Residues 120–309 form the ATP-grasp domain; the sequence is RLAAETLGLP…EFALHARAIL (190 aa). 2 residues coordinate Mg(2+): E268 and E280. Residues D287, K361, and 368-369 each bind N(1)-(5-phospho-beta-D-ribosyl)glycinamide; that span reads RR.

This sequence belongs to the PurK/PurT family. Homodimer.

It catalyses the reaction N(1)-(5-phospho-beta-D-ribosyl)glycinamide + formate + ATP = N(2)-formyl-N(1)-(5-phospho-beta-D-ribosyl)glycinamide + ADP + phosphate + H(+). The protein operates within purine metabolism; IMP biosynthesis via de novo pathway; N(2)-formyl-N(1)-(5-phospho-D-ribosyl)glycinamide from N(1)-(5-phospho-D-ribosyl)glycinamide (formate route): step 1/1. Its function is as follows. Involved in the de novo purine biosynthesis. Catalyzes the transfer of formate to 5-phospho-ribosyl-glycinamide (GAR), producing 5-phospho-ribosyl-N-formylglycinamide (FGAR). Formate is provided by PurU via hydrolysis of 10-formyl-tetrahydrofolate. The sequence is that of Formate-dependent phosphoribosylglycinamide formyltransferase from Xanthomonas oryzae pv. oryzae (strain PXO99A).